Consider the following 240-residue polypeptide: Protein OXIDATIVE STRESS 3 LIKE 4 (240 aa).

The segment at 1–128 is disordered; it reads MELMAKPTFS…SKSFGNLGEI (128 aa). Residues 51 to 66 show a composition bias toward polar residues; sequence WSGQTADYSSDSSSIG. Positions 70 to 84 are enriched in acidic residues; it reads DSEEDEEESENENDD. Positions 142-150 match the Nuclear localization signal motif; sequence NKRRRLQIC. The tract at residues 163 to 207 is disordered; that stretch reads NPKSMPLLPVNEDEDDDDEDDDEEDLKSGFDENKSSSDEEGVKKV. Positions 173–187 are enriched in acidic residues; that stretch reads NEDEDDDDEDDDEED. Residues 188-205 show a composition bias toward basic and acidic residues; the sequence is LKSGFDENKSSSDEEGVK. The tract at residues 202-229 is kinase-inducible domain (KID); it reads EGVKKVVVRKGSFKNRAYKSRSCFALSD. Phosphoserine is present on serine 213.

In terms of assembly, interacts with HDA19; Ser-213 is critical for this interaction.

It localises to the nucleus. Functionally, transcription activator which may regulates gene expression through interaction with the histone deacetylase HDA19. Promotes slightly the tolerance to cadmium (Cd) and to oxidizing chemicals (e.g. diamide and tert-butyl hydroperoxide (t-BOOH)). This chain is Protein OXIDATIVE STRESS 3 LIKE 4, found in Arabidopsis thaliana (Mouse-ear cress).